The chain runs to 500 residues: Cytochrome P450 71B26 (500 aa).

The chain crosses the membrane as a helical span at residues 1–21 (MDSIWILSLLFFIIFLLLAAF). Cys-440 provides a ligand contact to heme.

Belongs to the cytochrome P450 family. Heme is required as a cofactor.

It is found in the membrane. This chain is Cytochrome P450 71B26 (CYP71B26), found in Arabidopsis thaliana (Mouse-ear cress).